Reading from the N-terminus, the 535-residue chain is CTP synthase (535 aa).

The interval 1-267 (MTKYIFVTGG…DQIVCDHLKL (267 aa)) is amidoligase domain. Ser-13 lines the CTP pocket. Ser-13 serves as a coordination point for UTP. 14–19 (SLGKGI) is an ATP binding site. An L-glutamine-binding site is contributed by Tyr-54. Asp-71 is a binding site for ATP. Mg(2+)-binding residues include Asp-71 and Glu-141. CTP-binding positions include 148-150 (DIE), 188-193 (KTKPTQ), and Lys-224. UTP is bound by residues 188-193 (KTKPTQ) and Lys-224. 240–242 (RDA) contributes to the ATP binding site. The Glutamine amidotransferase type-1 domain maps to 292-534 (KIALVGKYVE…VRASITNKES (243 aa)). L-glutamine is bound at residue Gly-354. The Nucleophile; for glutamine hydrolysis role is filled by Cys-381. Residues 382–385 (LGMQ), Glu-405, and Arg-462 contribute to the L-glutamine site. Residues His-507 and Glu-509 contribute to the active site.

Belongs to the CTP synthase family. In terms of assembly, homotetramer.

It catalyses the reaction UTP + L-glutamine + ATP + H2O = CTP + L-glutamate + ADP + phosphate + 2 H(+). It carries out the reaction L-glutamine + H2O = L-glutamate + NH4(+). The catalysed reaction is UTP + NH4(+) + ATP = CTP + ADP + phosphate + 2 H(+). It participates in pyrimidine metabolism; CTP biosynthesis via de novo pathway; CTP from UDP: step 2/2. Allosterically activated by GTP, when glutamine is the substrate; GTP has no effect on the reaction when ammonia is the substrate. The allosteric effector GTP functions by stabilizing the protein conformation that binds the tetrahedral intermediate(s) formed during glutamine hydrolysis. Inhibited by the product CTP, via allosteric rather than competitive inhibition. Functionally, catalyzes the ATP-dependent amination of UTP to CTP with either L-glutamine or ammonia as the source of nitrogen. Regulates intracellular CTP levels through interactions with the four ribonucleotide triphosphates. In Bacillus cereus (strain AH820), this protein is CTP synthase.